The following is a 167-amino-acid chain: Phosphopantetheine adenylyltransferase (167 aa).

Position 10 (threonine 10) interacts with substrate. Residues 10 to 11 (TF) and histidine 18 contribute to the ATP site. The substrate site is built by alanine 77 and arginine 91. ATP contacts are provided by residues 92 to 94 (GLR), glutamate 102, and 127 to 133 (YSFISSS).

Belongs to the bacterial CoaD family. Homohexamer. The cofactor is Mg(2+).

It is found in the cytoplasm. The enzyme catalyses (R)-4'-phosphopantetheine + ATP + H(+) = 3'-dephospho-CoA + diphosphate. Its pathway is cofactor biosynthesis; coenzyme A biosynthesis; CoA from (R)-pantothenate: step 4/5. In terms of biological role, reversibly transfers an adenylyl group from ATP to 4'-phosphopantetheine, yielding dephospho-CoA (dPCoA) and pyrophosphate. This chain is Phosphopantetheine adenylyltransferase, found in Thermomicrobium roseum (strain ATCC 27502 / DSM 5159 / P-2).